Consider the following 66-residue polypeptide: MKMSALFVIFGLALLFCNSFAAELKATGRGCGGLMDGCDGKSTFCCSGFNCSPTWKWCVYARPGRR.

An N-terminal signal peptide occupies residues 1–21 (MKMSALFVIFGLALLFCNSFA). Residues 22 to 29 (AELKATGR) constitute a propeptide that is removed on maturation. Cystine bridges form between Cys31-Cys46, Cys38-Cys51, and Cys45-Cys58. The residue at position 63 (Pro63) is a Proline amide.

This sequence belongs to the neurotoxin 10 (Hwtx-1) family. 46 (Jztx-7/10/12) subfamily. Expressed by the venom gland.

It is found in the secreted. Functionally, probable ion channel inhibitor. The polypeptide is U1-theraphotoxin-Cg1d 1 (Chilobrachys guangxiensis (Chinese earth tiger tarantula)).